The following is a 234-amino-acid chain: Peroxiredoxin-2E, chloroplastic (234 aa).

A chloroplast-targeting transit peptide spans Met1–Thr70. Residues Ile73 to Leu234 enclose the Thioredoxin domain. Position 82 is a phosphoserine (Ser82). The active-site Cysteine sulfenic acid (-SOH) intermediate is the Cys121.

The protein belongs to the peroxiredoxin family. Prx5 subfamily. In terms of assembly, monomer. In terms of tissue distribution, expressed in all tissues but predominantly in buds, siliques and seeds.

It is found in the plastid. It localises to the chloroplast stroma. The catalysed reaction is [glutaredoxin]-dithiol + a hydroperoxide = [glutaredoxin]-disulfide + an alcohol + H2O. Thiol-specific peroxidase that catalyzes the reduction of hydrogen peroxide and organic hydroperoxides to water and alcohols, respectively. Plays a role in cell protection against oxidative stress by detoxifying peroxides. May be involved in chloroplast redox homeostasis. The polypeptide is Peroxiredoxin-2E, chloroplastic (PRXIIE) (Arabidopsis thaliana (Mouse-ear cress)).